We begin with the raw amino-acid sequence, 406 residues long: Exodeoxyribonuclease 7 large subunit (406 aa).

The protein belongs to the XseA family. As to quaternary structure, heterooligomer composed of large and small subunits.

Its subcellular location is the cytoplasm. The enzyme catalyses Exonucleolytic cleavage in either 5'- to 3'- or 3'- to 5'-direction to yield nucleoside 5'-phosphates.. In terms of biological role, bidirectionally degrades single-stranded DNA into large acid-insoluble oligonucleotides, which are then degraded further into small acid-soluble oligonucleotides. This is Exodeoxyribonuclease 7 large subunit from Desulforudis audaxviator (strain MP104C).